The primary structure comprises 660 residues: Glycogen debranching enzyme (660 aa).

The Nucleophile role is filled by Asp-338. Residue Glu-373 is the Proton donor of the active site. Positions 460 to 472 are enriched in basic and acidic residues; it reads NEANGEDNRDGAW. Residues 460–482 are disordered; that stretch reads NEANGEDNRDGAWENHSNNHGYE.

The protein belongs to the glycosyl hydrolase 13 family.

It catalyses the reaction Hydrolysis of (1-&gt;6)-alpha-D-glucosidic linkages to branches with degrees of polymerization of three or four glucose residues in limit dextrin.. The protein operates within glycan degradation; glycogen degradation. Its function is as follows. Removes maltotriose and maltotetraose chains that are attached by 1,6-alpha-linkage to the limit dextrin main chain, generating a debranched limit dextrin. The chain is Glycogen debranching enzyme from Cronobacter sakazakii (strain ATCC BAA-894) (Enterobacter sakazakii).